We begin with the raw amino-acid sequence, 64 residues long: Large ribosomal subunit protein bL35 (64 aa).

Residues 1–22 (MPKMKSHTGMGKRVRVTGKGKI) show a composition bias toward basic residues. Positions 1–28 (MPKMKSHTGMGKRVRVTGKGKIVKQQAG) are disordered.

The protein belongs to the bacterial ribosomal protein bL35 family.

The protein is Large ribosomal subunit protein bL35 of Salinispora tropica (strain ATCC BAA-916 / DSM 44818 / JCM 13857 / NBRC 105044 / CNB-440).